A 106-amino-acid chain; its full sequence is Large ribosomal subunit protein bL21 (106 aa).

The protein belongs to the bacterial ribosomal protein bL21 family. Part of the 50S ribosomal subunit. Contacts protein L20.

In terms of biological role, this protein binds to 23S rRNA in the presence of protein L20. The chain is Large ribosomal subunit protein bL21 from Thermosipho africanus (strain TCF52B).